Here is a 207-residue protein sequence, read N- to C-terminus: MFISFEGCEGTGKTTHSSYLFEKLSKKYSCVLTKEPGGGLFNEVIRNILLHSYNKQIDFHTEALLFAADRAEHLSKLIIPALQQNKIVICDRYLDSTIAYQVYARGLSKDFVLNINNLALNYMPNITFYLDLDPKIGIQRVKQFRPKEINSFDLQKLSFHKKVRKGYLDLYQKDQQKRIFLIDASKSLEKIYNIIEQKLKEVFQIDL.

7 to 14 (GCEGTGKT) serves as a coordination point for ATP.

This sequence belongs to the thymidylate kinase family.

The catalysed reaction is dTMP + ATP = dTDP + ADP. In terms of biological role, phosphorylation of dTMP to form dTDP in both de novo and salvage pathways of dTTP synthesis. This chain is Thymidylate kinase, found in Aster yellows witches'-broom phytoplasma (strain AYWB).